The primary structure comprises 181 residues: Isopentenyl-diphosphate Delta-isomerase (181 aa).

Mn(2+) contacts are provided by H25 and H32. Positions P30–M164 constitute a Nudix hydrolase domain. C67 is an active-site residue. Residue H69 coordinates Mn(2+). E87 is a binding site for Mg(2+). 2 residues coordinate Mn(2+): E114 and E116. E116 is an active-site residue.

The protein belongs to the IPP isomerase type 1 family. In terms of assembly, homodimer. Mg(2+) serves as cofactor. Mn(2+) is required as a cofactor.

Its subcellular location is the cytoplasm. It carries out the reaction isopentenyl diphosphate = dimethylallyl diphosphate. It participates in isoprenoid biosynthesis; dimethylallyl diphosphate biosynthesis; dimethylallyl diphosphate from isopentenyl diphosphate: step 1/1. Functionally, catalyzes the 1,3-allylic rearrangement of the homoallylic substrate isopentenyl (IPP) to its highly electrophilic allylic isomer, dimethylallyl diphosphate (DMAPP). The polypeptide is Isopentenyl-diphosphate Delta-isomerase (Salmonella agona (strain SL483)).